A 261-amino-acid polypeptide reads, in one-letter code: Zinc import ATP-binding protein ZnuC (261 aa).

Residues 6 to 227 (IQLNNIHLRF…PEYLKLFGKQ (222 aa)) enclose the ABC transporter domain. 38–45 (GPNGAGKS) contacts ATP.

Belongs to the ABC transporter superfamily. Zinc importer (TC 3.A.1.15.5) family. The complex is composed of two ATP-binding proteins (ZnuC), two transmembrane proteins (ZnuB) and a solute-binding protein (ZnuA).

The protein localises to the cell inner membrane. The catalysed reaction is Zn(2+)(out) + ATP(in) + H2O(in) = Zn(2+)(in) + ADP(in) + phosphate(in) + H(+)(in). Its function is as follows. Part of the ABC transporter complex ZnuABC involved in zinc import. Responsible for energy coupling to the transport system. The chain is Zinc import ATP-binding protein ZnuC from Saccharophagus degradans (strain 2-40 / ATCC 43961 / DSM 17024).